The following is a 164-amino-acid chain: Transcription antitermination protein NusB (164 aa).

It belongs to the NusB family.

In terms of biological role, involved in transcription antitermination. Required for transcription of ribosomal RNA (rRNA) genes. Binds specifically to the boxA antiterminator sequence of the ribosomal RNA (rrn) operons. The polypeptide is Transcription antitermination protein NusB (Chlorobium limicola (strain DSM 245 / NBRC 103803 / 6330)).